Reading from the N-terminus, the 154-residue chain is Avirulence protein ATR13 (154 aa).

The signal sequence occupies residues 1-19 (MRLVHAVLLPGIIVFVSNG). The short motif at 38–41 (RQLR) is the RxLR element. Positions 50-92 (LSRASFGLGKAQDPLDKFFSKIIFSGKPIETSYSAKGIHEKII) are leucine heptad repeat region. The segment at 93–103 (EAHDLHVSKSK) is single repeat region. Residues 104–154 (NAPIQYASVMEYLKKTYPGPDIERIVSTLERHDEVGAKDLGAKLRDALDRQ) are highly variable C-terminus domain.

It belongs to the RxLR effector family.

The protein resides in the secreted. The protein localises to the host cytoplasm. Secreted effector that acts as an elicitor of hypersensitive response (HR) specifically on plants carrying defense protein RPP13. Recognition of ATR13 by RPP13 initiates defense responses that are effective against oomycete, bacterial and viral pathogens. The allele ATR13-Emco5 recognizes RPP13-Nd, the RPP13 defense protein from Arabidopsis thaliana ecotype Niederzenz. The chain is Avirulence protein ATR13 from Hyaloperonospora arabidopsidis (Peronospora arabidopsidis).